A 332-amino-acid polypeptide reads, in one-letter code: GTPase Obg (332 aa).

Residues 1-159 (MKFLDQAKIY…RWVWLRLKLI (159 aa)) form the Obg domain. The OBG-type G domain maps to 160–328 (ADAGLVGLPN…VLRETLRMIR (169 aa)). Residues 166–173 (GLPNAGKS), 191–195 (FTTLH), 213–216 (DIPG), 280–283 (NKMD), and 309–311 (SAA) contribute to the GTP site. Positions 173 and 193 each coordinate Mg(2+).

The protein belongs to the TRAFAC class OBG-HflX-like GTPase superfamily. OBG GTPase family. Monomer. Mg(2+) serves as cofactor.

The protein localises to the cytoplasm. In terms of biological role, an essential GTPase which binds GTP, GDP and possibly (p)ppGpp with moderate affinity, with high nucleotide exchange rates and a fairly low GTP hydrolysis rate. Plays a role in control of the cell cycle, stress response, ribosome biogenesis and in those bacteria that undergo differentiation, in morphogenesis control. The protein is GTPase Obg of Acidiphilium cryptum (strain JF-5).